We begin with the raw amino-acid sequence, 422 residues long: Glutamate-1-semialdehyde 2,1-aminomutase (422 aa).

Lys264 carries the N6-(pyridoxal phosphate)lysine modification.

Belongs to the class-III pyridoxal-phosphate-dependent aminotransferase family. HemL subfamily. Homodimer. Pyridoxal 5'-phosphate serves as cofactor.

It is found in the cytoplasm. It catalyses the reaction (S)-4-amino-5-oxopentanoate = 5-aminolevulinate. The protein operates within porphyrin-containing compound metabolism; protoporphyrin-IX biosynthesis; 5-aminolevulinate from L-glutamyl-tRNA(Glu): step 2/2. The sequence is that of Glutamate-1-semialdehyde 2,1-aminomutase from Clostridium kluyveri (strain ATCC 8527 / DSM 555 / NBRC 12016 / NCIMB 10680 / K1).